Here is a 407-residue protein sequence, read N- to C-terminus: 12S rRNA N(4)-cytidine methyltransferase METTL15 (407 aa).

The tract at residues 44-63 (EAQEETDQTGIQELHRSQDR) is disordered. S-adenosyl-L-methionine is bound by residues 100–102 (GGH), Asp-119, Phe-146, Asp-169, and Gln-176. The residue at position 358 (Ser-358) is a Phosphoserine. Residues 386–407 (EDEDVQDNPRGRSAKLRAAIKL) are disordered. Over residues 397 to 407 (RSAKLRAAIKL) the composition is skewed to basic residues.

Belongs to the methyltransferase superfamily. RsmH family.

It is found in the mitochondrion matrix. It carries out the reaction cytidine(839) in 12S rRNA + S-adenosyl-L-methionine = N(4)-methylcytidine(839) in 12S rRNA + S-adenosyl-L-homocysteine + H(+). In terms of biological role, N4-methylcytidine (m4C) methyltransferase responsible for the methylation of position C839 in mitochondrial 12S rRNA. Involved in the stabilization of 12S rRNA folding, therefore facilitating the assembly of the mitochondrial small ribosomal subunits. The sequence is that of 12S rRNA N(4)-cytidine methyltransferase METTL15 (METTL15) from Bos taurus (Bovine).